A 1079-amino-acid polypeptide reads, in one-letter code: Isoleucine--tRNA ligase (1079 aa).

The 'HIGH' region signature appears at 53–63; the sequence is PFANGLPHYGH. The short motif at 611–615 is the 'KMSKS' region element; sequence KLSKR. Lys-614 is a binding site for ATP.

This sequence belongs to the class-I aminoacyl-tRNA synthetase family. IleS type 2 subfamily. As to quaternary structure, monomer. It depends on Zn(2+) as a cofactor.

The protein localises to the cytoplasm. It carries out the reaction tRNA(Ile) + L-isoleucine + ATP = L-isoleucyl-tRNA(Ile) + AMP + diphosphate. Its function is as follows. Catalyzes the attachment of isoleucine to tRNA(Ile). As IleRS can inadvertently accommodate and process structurally similar amino acids such as valine, to avoid such errors it has two additional distinct tRNA(Ile)-dependent editing activities. One activity is designated as 'pretransfer' editing and involves the hydrolysis of activated Val-AMP. The other activity is designated 'posttransfer' editing and involves deacylation of mischarged Val-tRNA(Ile). In Rickettsia canadensis (strain McKiel), this protein is Isoleucine--tRNA ligase.